A 401-amino-acid chain; its full sequence is 1-deoxy-D-xylulose 5-phosphate reductoisomerase (401 aa).

NADPH contacts are provided by T11, G12, S13, I14, R38, N39, and N125. K126 is a binding site for 1-deoxy-D-xylulose 5-phosphate. E127 lines the NADPH pocket. Residue D151 participates in Mn(2+) binding. 1-deoxy-D-xylulose 5-phosphate-binding residues include S152, E153, S179, and H202. Residue E153 participates in Mn(2+) binding. G208 contributes to the NADPH binding site. S215, N220, K221, and E224 together coordinate 1-deoxy-D-xylulose 5-phosphate. E224 contributes to the Mn(2+) binding site.

It belongs to the DXR family. Mg(2+) is required as a cofactor. It depends on Mn(2+) as a cofactor.

It catalyses the reaction 2-C-methyl-D-erythritol 4-phosphate + NADP(+) = 1-deoxy-D-xylulose 5-phosphate + NADPH + H(+). It functions in the pathway isoprenoid biosynthesis; isopentenyl diphosphate biosynthesis via DXP pathway; isopentenyl diphosphate from 1-deoxy-D-xylulose 5-phosphate: step 1/6. Catalyzes the NADPH-dependent rearrangement and reduction of 1-deoxy-D-xylulose-5-phosphate (DXP) to 2-C-methyl-D-erythritol 4-phosphate (MEP). This Paraburkholderia phytofirmans (strain DSM 17436 / LMG 22146 / PsJN) (Burkholderia phytofirmans) protein is 1-deoxy-D-xylulose 5-phosphate reductoisomerase.